The chain runs to 549 residues: mRNA-capping enzyme subunit beta (549 aa).

Ser2 carries the N-acetylserine modification. Ser15 is subject to Phosphoserine. The segment at Leu30–Asn169 is disordered. The segment covering Asp86–Met96 has biased composition (acidic residues). A Phosphoserine modification is found at Ser124. Residues Ala135 to Ile157 are compositionally biased toward basic and acidic residues. Lys223 acts as the N6-GMP-lysine intermediate in catalysis.

Belongs to the fungal TPase family. In terms of assembly, heterodimer. The mRNA-capping enzyme is composed of two separate chains alpha and beta, respectively a mRNA guanylyltransferase and an mRNA 5'-triphosphate monophosphatase. It depends on Mg(2+) as a cofactor.

Its subcellular location is the nucleus. It catalyses the reaction a 5'-end triphospho-ribonucleoside in mRNA + H2O = a 5'-end diphospho-ribonucleoside in mRNA + phosphate + H(+). Functionally, first step of mRNA capping. Converts the 5'-triphosphate end of a nascent mRNA chain into a diphosphate end. This is mRNA-capping enzyme subunit beta (CET1) from Saccharomyces cerevisiae (strain ATCC 204508 / S288c) (Baker's yeast).